The chain runs to 510 residues: MKLKPIEVAEILQKEIANINCLSELEEVGQVITVGDGIAQIYGLANVKSGEVVEFKSGVKGLVLNLENDSVGAVIMGDDNQVQQGDNVKRTKAVLEVPVGKALLGRVVDALGNPIDGKGDIASKEYRHIEMKAPGIIERTSVSEPVQTGIKAIDSLIPIGRGQRELIIGDRQTGKTAIAVDTIINQKQAHSLTNESDKIYCIYVAIGQKRSSVAQIVKKLEDAGAMDYTLIVSATASEAAALQFIAPYSACSMGEYFRDNGMHALIIYDDLSKHAVAYRQISLLLRRPPGREAYPGDVFYLHSRLLERAAKMSEEKGSGSLTALPIIETQAGDVSAYIPTNVISITDGQIFLESELFYKGVRPAVNVGISVSRVGSAAQIKAMKQVAGSVKLELAQFRELESFSQFGSDLDPATKAQIDHGKRLVEILKQAQYHPFPVEEQIVSIYVGTKKYLNDVPLQKVKEFEDKMLTEIRLNKKDILESIKNEQRITEETEQKLKAFLENFVKEFVK.

169–176 (GDRQTGKT) serves as a coordination point for ATP.

It belongs to the ATPase alpha/beta chains family. As to quaternary structure, F-type ATPases have 2 components, CF(1) - the catalytic core - and CF(0) - the membrane proton channel. CF(1) has five subunits: alpha(3), beta(3), gamma(1), delta(1), epsilon(1). CF(0) has three main subunits: a(1), b(2) and c(9-12). The alpha and beta chains form an alternating ring which encloses part of the gamma chain. CF(1) is attached to CF(0) by a central stalk formed by the gamma and epsilon chains, while a peripheral stalk is formed by the delta and b chains.

It is found in the cell inner membrane. The catalysed reaction is ATP + H2O + 4 H(+)(in) = ADP + phosphate + 5 H(+)(out). Produces ATP from ADP in the presence of a proton gradient across the membrane. The alpha chain is a regulatory subunit. The chain is ATP synthase subunit alpha from Rickettsia conorii (strain ATCC VR-613 / Malish 7).